A 448-amino-acid chain; its full sequence is Glucan 1,3-beta-glucosidase I/II (448 aa).

Positions 1–19 are cleaved as a signal peptide; the sequence is MLSLKTLLCTLLTVSSVLA. A propeptide spanning residues 20 to 40 is cleaved from the precursor; the sequence is TPVPARDPSSIQFVHEENKKR. The N-linked (GlcNAc...) asparagine glycan is linked to asparagine 165. The Proton donor role is filled by glutamate 232. A glycan (N-linked (GlcNAc...) asparagine) is linked at asparagine 325. Glutamate 334 functions as the Nucleophile in the catalytic mechanism.

It belongs to the glycosyl hydrolase 5 (cellulase A) family.

The protein resides in the secreted. Its subcellular location is the cell wall. The enzyme catalyses Successive hydrolysis of beta-D-glucose units from the non-reducing ends of (1-&gt;3)-beta-D-glucans, releasing alpha-glucose.. Functionally, glucanases possibly play a role in cell expansion during growth, in cell-cell fusion during mating, and in spore release during sporulation. This enzyme hydrolyzes both 1,3-beta- and 1,6-beta-linkages and even has beta-glucosidase activity. It could also function biosynthetically as a transglycosylase. This Saccharomyces cerevisiae (strain ATCC 204508 / S288c) (Baker's yeast) protein is Glucan 1,3-beta-glucosidase I/II (EXG1).